The chain runs to 478 residues: 3-isopropylmalate dehydratase large subunit (478 aa).

[4Fe-4S] cluster contacts are provided by C347, C407, and C410.

This sequence belongs to the aconitase/IPM isomerase family. LeuC type 1 subfamily. Heterodimer of LeuC and LeuD. [4Fe-4S] cluster serves as cofactor.

It catalyses the reaction (2R,3S)-3-isopropylmalate = (2S)-2-isopropylmalate. It functions in the pathway amino-acid biosynthesis; L-leucine biosynthesis; L-leucine from 3-methyl-2-oxobutanoate: step 2/4. In terms of biological role, catalyzes the isomerization between 2-isopropylmalate and 3-isopropylmalate, via the formation of 2-isopropylmaleate. The sequence is that of 3-isopropylmalate dehydratase large subunit from Prochlorococcus marinus (strain MIT 9313).